The following is a 293-amino-acid chain: GPN-loop GTPase 3 (293 aa).

Residue 13 to 18 participates in GTP binding; that stretch reads GAGKST. A Gly-Pro-Asn (GPN)-loop; involved in dimer interface motif is present at residues 70-72; it reads GPN. 176-179 provides a ligand contact to GTP; that stretch reads SKMD. The segment covering 272 to 281 has biased composition (basic and acidic residues); sequence HEAQEPREPN. The segment at 272–293 is disordered; that stretch reads HEAQEPREPNDEQDVDYEDADI. Positions 282–293 are enriched in acidic residues; that stretch reads DEQDVDYEDADI.

It belongs to the GPN-loop GTPase family. As to quaternary structure, heterodimers with gpn1 or gpn2. Binds to RNA polymerase II (RNAPII).

Functionally, small GTPase required for proper nuclear import of RNA polymerase II and III (RNAPII and RNAPIII). May act at an RNAP assembly step prior to nuclear import. The protein is GPN-loop GTPase 3 of Aspergillus fumigatus (strain ATCC MYA-4609 / CBS 101355 / FGSC A1100 / Af293) (Neosartorya fumigata).